The chain runs to 371 residues: Queuine tRNA-ribosyltransferase (371 aa).

The Proton acceptor role is filled by aspartate 90. Substrate-binding positions include 90-94 (DSGGF), aspartate 144, glutamine 188, and glycine 215. Residues 246–252 (GVGTPED) form an RNA binding region. Aspartate 265 serves as the catalytic Nucleophile. Residues 270-274 (TRNAR) form an RNA binding; important for wobble base 34 recognition region. Positions 303, 305, 308, and 334 each coordinate Zn(2+).

It belongs to the queuine tRNA-ribosyltransferase family. As to quaternary structure, homodimer. Within each dimer, one monomer is responsible for RNA recognition and catalysis, while the other monomer binds to the replacement base PreQ1. Requires Zn(2+) as cofactor.

It carries out the reaction 7-aminomethyl-7-carbaguanine + guanosine(34) in tRNA = 7-aminomethyl-7-carbaguanosine(34) in tRNA + guanine. The protein operates within tRNA modification; tRNA-queuosine biosynthesis. Functionally, catalyzes the base-exchange of a guanine (G) residue with the queuine precursor 7-aminomethyl-7-deazaguanine (PreQ1) at position 34 (anticodon wobble position) in tRNAs with GU(N) anticodons (tRNA-Asp, -Asn, -His and -Tyr). Catalysis occurs through a double-displacement mechanism. The nucleophile active site attacks the C1' of nucleotide 34 to detach the guanine base from the RNA, forming a covalent enzyme-RNA intermediate. The proton acceptor active site deprotonates the incoming PreQ1, allowing a nucleophilic attack on the C1' of the ribose to form the product. After dissociation, two additional enzymatic reactions on the tRNA convert PreQ1 to queuine (Q), resulting in the hypermodified nucleoside queuosine (7-(((4,5-cis-dihydroxy-2-cyclopenten-1-yl)amino)methyl)-7-deazaguanosine). The protein is Queuine tRNA-ribosyltransferase of Neisseria gonorrhoeae (strain ATCC 700825 / FA 1090).